The chain runs to 1563 residues: Rab-3-interacting molecule unc-10 (1563 aa).

In terms of domain architecture, RabBD spans 7–133 (MPDLSHLSAE…AKTGKWFQPE (127 aa)). Basic and acidic residues predominate over residues 25–35 (FKRQKDEEAKE). The interval 25 to 50 (FKRQKDEEAKETQISQKASEELSELD) is disordered. Residues 66 to 121 (TQDDAICQICQKTKFADGIGHKCFYCQLRSCARCGGRAQSKNKAIWACSLCQKRQQ) form an FYVE-type zinc finger. Residues cysteine 72, cysteine 75, cysteine 88, cysteine 91, cysteine 96, cysteine 99, cysteine 113, and cysteine 116 each coordinate Zn(2+). Disordered regions lie at residues 128–466 (KWFQ…DHLN) and 582–605 (GGLD…RNDH). The span at 172-182 (NTPNYQNNQQP) shows a compositional bias: polar residues. Composition is skewed to low complexity over residues 190–284 (NHNQ…RNQT) and 300–316 (QTPQ…VGAA). A compositionally biased stretch (basic and acidic residues) spans 326–345 (QEQHHQQMNEQRTDNNRMRE). Polar residues-rich tracts occupy residues 356–367 (RQPSLEQTTPMN) and 379–389 (QRPTFYTGNSE). The span at 395–415 (FDGQMQQGSQQNNQNQNQNNR) shows a compositional bias: low complexity. The PDZ domain occupies 643-733 (HMILHRTENS…DTSVELIVSR (91 aa)). Residues 840–962 (IFGRIEVSFV…PLDGEHSLMC (123 aa)) enclose the C2 1 domain. Disordered stretches follow at residues 1054–1163 (ENDI…YLGD), 1177–1311 (GQMT…GGSA), and 1346–1373 (VGIP…KEST). Over residues 1086–1097 (WTQNHQRQSGYT) the composition is skewed to polar residues. Over residues 1112–1121 (YNRRQQRRPR) the composition is skewed to basic residues. Basic and acidic residues predominate over residues 1129–1154 (MEREDMYDPTRKHRDDNEYSMRESVR). Residues 1181-1230 (PKQHNQQHQPHPLSQAHQQQQTAGVQPQHHQGFQQQQHPQQPNQQMQQMQ) show a composition bias toward low complexity. Polar residues predominate over residues 1242–1255 (GSETLSVHSTNSMP). Residues 1256 to 1277 (TTMTTVNRRNMNANNTSNDNTS) are compositionally biased toward low complexity. The segment covering 1278 to 1288 (FAETPTANTNR) has biased composition (polar residues). Residues 1297-1311 (NSLASSSSVAGGGSA) are compositionally biased toward low complexity. One can recognise a C2 2 domain in the interval 1417-1536 (VLGEIQIALM…LGSQPLIGWY (120 aa)).

In terms of tissue distribution, restricted to discrete puncta in synapse-rich regions of the nervous system including the nerve ring, the ventral nerve cord and the dorsal nerve cord. Localized expression was found in the head.

The protein localises to the synapse. Functionally, regulates the efficiency of a post-docking step of the release pathway. Acts after vesicle docking likely via regulating priming. May regulate the conformational changes in syntaxin. Binding of vesicles via rab-3[GTP] to Rim may signal the presence of a docked synaptic vesicle. Rim may then signal to unc-13 to change the conformation of syntaxin from the closed to the open state. Syntaxin could then engage synaptobrevin on the docked vesicle to form SNARE complexes and to prime the vesicle for release. Not required for the development or the structural organization of synapses. May play a role in regulating entry into the dauer state. In Caenorhabditis elegans, this protein is Rab-3-interacting molecule unc-10.